Here is a 108-residue protein sequence, read N- to C-terminus: Iron-sulfur cluster assembly protein CyaY (108 aa).

Belongs to the frataxin family.

Its function is as follows. Involved in iron-sulfur (Fe-S) cluster assembly. May act as a regulator of Fe-S biogenesis. This Burkholderia orbicola (strain MC0-3) protein is Iron-sulfur cluster assembly protein CyaY.